Here is a 779-residue protein sequence, read N- to C-terminus: FAD-dependent monooxygenase BOA8 (779 aa).

FAD is bound by residues Glu-85, Arg-128, Asp-331, and Ala-344. 7 helical membrane passes run 471-491 (AQLA…KTPE), 504-524 (VKLD…IWTI), 542-562 (AFLL…YFFF), 587-607 (ILPL…WSSI), 618-638 (NAWY…KFIV), 665-685 (ILIC…SIAF), and 742-762 (LILT…GLIV).

Belongs to the paxM FAD-dependent monooxygenase family. FAD serves as cofactor.

The protein resides in the membrane. The protein operates within polyketide biosynthesis. Its function is as follows. FAD-dependent monooxygenase; part of the gene cluster B that mediates the biosynthesis of botcinic acid and its botcinin derivatives, acetate-derived polyketides that contribute to virulence when combined with the sesquiterpene botrydial. Botcinic acid and its derivatives have been shown to induce chlorosis and necrosis during host plant infection, but also have antifungal activities. Two polyketide synthases, BOA6 and BOA9, are involved in the biosynthesis of botcinins. BOA6 mediates the formation of the per-methylated tetraketide core by condensation of four units of malonyl-CoA with one unit of acetyl-CoA, which would be methylated in activated methylene groups to yield a bicyclic acid intermediate that could then either be converted to botrylactone derivatives or lose the starter acetate unit through a retro-Claisen type C-C bond cleavage to yield botcinin derivatives. The second polyketide synthase, BOA9, is probably required for the biosynthesis of the tetraketide side chain of botcinins. The methyltransferase (MT) domain within BOA6 is probably responsible for the incorporation of four methyl groups. The trans-enoyl reductase BOA5 might take over the enoyl reductase function of BOA6 that misses an ER domain. The monooxygenases BOA2, BOA3 and BOA4 might be involved in further hydroxylations at C4, C5 and C8, whereas BOA7, close to BOA9, could potentially be involved in the hydroxylation at C4 in the side chain of botcinins. This Botryotinia fuckeliana (strain B05.10) (Noble rot fungus) protein is FAD-dependent monooxygenase BOA8.